The sequence spans 321 residues: tRNA(Ile)-lysidine synthase (321 aa).

Residue 30 to 35 participates in ATP binding; sequence SGGSDS.

Belongs to the tRNA(Ile)-lysidine synthase family.

It localises to the cytoplasm. It carries out the reaction cytidine(34) in tRNA(Ile2) + L-lysine + ATP = lysidine(34) in tRNA(Ile2) + AMP + diphosphate + H(+). Ligates lysine onto the cytidine present at position 34 of the AUA codon-specific tRNA(Ile) that contains the anticodon CAU, in an ATP-dependent manner. Cytidine is converted to lysidine, thus changing the amino acid specificity of the tRNA from methionine to isoleucine. The chain is tRNA(Ile)-lysidine synthase from Chlamydia muridarum (strain MoPn / Nigg).